Reading from the N-terminus, the 230-residue chain is Large ribosomal subunit protein uL1 (230 aa).

It belongs to the universal ribosomal protein uL1 family. In terms of assembly, part of the 50S ribosomal subunit.

Functionally, binds directly to 23S rRNA. The L1 stalk is quite mobile in the ribosome, and is involved in E site tRNA release. Its function is as follows. Protein L1 is also a translational repressor protein, it controls the translation of the L11 operon by binding to its mRNA. The polypeptide is Large ribosomal subunit protein uL1 (Afipia carboxidovorans (strain ATCC 49405 / DSM 1227 / KCTC 32145 / OM5) (Oligotropha carboxidovorans)).